Consider the following 549-residue polypeptide: Arginine-containing cyclodipeptide synthase amaA (549 aa).

The Conserved DDXXE motif motif lies at 445–449 (DDRAE).

It belongs to the arginine-containing cyclodipeptide synthase family.

The enzyme catalyses L-prolyl-tRNA(Pro) + L-arginyl-tRNA(Arg) = cyclo(L-arginyl-L-prolyl) + tRNA(Pro) + tRNA(Arg) + 2 H(+). It participates in secondary metabolite biosynthesis. Its function is as follows. Arginine-containing cyclodipeptide synthase; part of the cluster that mediates the biosynthesis of a highly modified cyclo-arginine-proline dipeptide (cRP). Within the pathway, amaA acts as the scaffold-generating enzyme and is responsible for formation of the cyclo-Arg-Pro diketopiperazine (cRW) from L-arginyl-tRNA(Arg) + L-prolyl-tRNA(Pro). Additional enzymes from the cluster then further modify the cyclo-Arg-Pro diketopiperazine (cRW) scaffold. The protein is Arginine-containing cyclodipeptide synthase amaA of Apiospora montagnei (Sphaeria apiospora).